The sequence spans 288 residues: F420-non-reducing hydrogenase vhu subunit G (288 aa).

The protein belongs to the [NiFe]/[NiFeSe] hydrogenase small subunit family. As to quaternary structure, the F420-non-reducing hydrogenase vhu is composed of four subunits; VhuA, VhuD, VhuG and VhuU.

The polypeptide is F420-non-reducing hydrogenase vhu subunit G (vhuG) (Methanocaldococcus jannaschii (strain ATCC 43067 / DSM 2661 / JAL-1 / JCM 10045 / NBRC 100440) (Methanococcus jannaschii)).